We begin with the raw amino-acid sequence, 78 residues long: Small ribosomal subunit protein bS20 (78 aa).

It belongs to the bacterial ribosomal protein bS20 family.

In terms of biological role, binds directly to 16S ribosomal RNA. This is Small ribosomal subunit protein bS20 from Streptococcus pneumoniae serotype 4 (strain ATCC BAA-334 / TIGR4).